We begin with the raw amino-acid sequence, 341 residues long: MSETAGKGVTMPEIMQSSYPDETLYREKDDSIRPSRLDDFIGQEELRENLKVFLNAARDRGQAMDHTLFYGNPGLGKTTLAQIIAAELGVNLICTSGPVLERSGDLAAILTNLSKHDILFVDEIHRMPITVEEILYPALEDYKLDLVIGQGPAARTVKIELEPFTLVGATTRIGLISSPLRDRFGIISRLEFYTPEELSQIILRTSRILNVPITKKGAIEIGRRSRGTPRIANRLLRRVRDFAAVFGSATVDEELVNHALQKLDVDEKGLDQMDRKLLTVLIELFAGGPVGIKTLAVACSEEVRTIEDIYEPYLIQCGFMKRTPRGRMATVKAYKHLNLTD.

A disordered region spans residues methionine 1–glutamate 22. The segment at threonine 4–tyrosine 193 is large ATPase domain (RuvB-L). ATP contacts are provided by residues isoleucine 32, arginine 33, glycine 74, lysine 77, threonine 78, threonine 79, glutamate 140 to tyrosine 142, arginine 183, tyrosine 193, and arginine 230. Threonine 78 is a binding site for Mg(2+). Residues threonine 194–aspartate 264 form a small ATPAse domain (RuvB-S) region. A head domain (RuvB-H) region spans residues glutamate 267–aspartate 341. DNA-binding residues include arginine 322 and arginine 327.

Belongs to the RuvB family. In terms of assembly, homohexamer. Forms an RuvA(8)-RuvB(12)-Holliday junction (HJ) complex. HJ DNA is sandwiched between 2 RuvA tetramers; dsDNA enters through RuvA and exits via RuvB. An RuvB hexamer assembles on each DNA strand where it exits the tetramer. Each RuvB hexamer is contacted by two RuvA subunits (via domain III) on 2 adjacent RuvB subunits; this complex drives branch migration. In the full resolvosome a probable DNA-RuvA(4)-RuvB(12)-RuvC(2) complex forms which resolves the HJ.

The protein localises to the cytoplasm. It carries out the reaction ATP + H2O = ADP + phosphate + H(+). Its function is as follows. The RuvA-RuvB-RuvC complex processes Holliday junction (HJ) DNA during genetic recombination and DNA repair, while the RuvA-RuvB complex plays an important role in the rescue of blocked DNA replication forks via replication fork reversal (RFR). RuvA specifically binds to HJ cruciform DNA, conferring on it an open structure. The RuvB hexamer acts as an ATP-dependent pump, pulling dsDNA into and through the RuvAB complex. RuvB forms 2 homohexamers on either side of HJ DNA bound by 1 or 2 RuvA tetramers; 4 subunits per hexamer contact DNA at a time. Coordinated motions by a converter formed by DNA-disengaged RuvB subunits stimulates ATP hydrolysis and nucleotide exchange. Immobilization of the converter enables RuvB to convert the ATP-contained energy into a lever motion, pulling 2 nucleotides of DNA out of the RuvA tetramer per ATP hydrolyzed, thus driving DNA branch migration. The RuvB motors rotate together with the DNA substrate, which together with the progressing nucleotide cycle form the mechanistic basis for DNA recombination by continuous HJ branch migration. Branch migration allows RuvC to scan DNA until it finds its consensus sequence, where it cleaves and resolves cruciform DNA. The protein is Holliday junction branch migration complex subunit RuvB of Lawsonia intracellularis (strain PHE/MN1-00).